Here is a 331-residue protein sequence, read N- to C-terminus: Tetraacyldisaccharide 4'-kinase (331 aa).

Residue Thr55–Thr62 coordinates ATP.

Belongs to the LpxK family.

The enzyme catalyses a lipid A disaccharide + ATP = a lipid IVA + ADP + H(+). It participates in glycolipid biosynthesis; lipid IV(A) biosynthesis; lipid IV(A) from (3R)-3-hydroxytetradecanoyl-[acyl-carrier-protein] and UDP-N-acetyl-alpha-D-glucosamine: step 6/6. Its function is as follows. Transfers the gamma-phosphate of ATP to the 4'-position of a tetraacyldisaccharide 1-phosphate intermediate (termed DS-1-P) to form tetraacyldisaccharide 1,4'-bis-phosphate (lipid IVA). The protein is Tetraacyldisaccharide 4'-kinase of Edwardsiella ictaluri (strain 93-146).